The following is an 87-amino-acid chain: Small ribosomal subunit protein uS15 (87 aa).

Belongs to the universal ribosomal protein uS15 family. Part of the 30S ribosomal subunit. Forms a bridge to the 50S subunit in the 70S ribosome, contacting the 23S rRNA.

One of the primary rRNA binding proteins, it binds directly to 16S rRNA where it helps nucleate assembly of the platform of the 30S subunit by binding and bridging several RNA helices of the 16S rRNA. Functionally, forms an intersubunit bridge (bridge B4) with the 23S rRNA of the 50S subunit in the ribosome. The protein is Small ribosomal subunit protein uS15 of Dehalococcoides mccartyi (strain ATCC BAA-2266 / KCTC 15142 / 195) (Dehalococcoides ethenogenes (strain 195)).